Consider the following 708-residue polypeptide: Ion-translocating oxidoreductase complex subunit C (708 aa).

4Fe-4S ferredoxin-type domains lie at 369-397 (GEPQ…QQLY) and 407-436 (KATT…VQYF). [4Fe-4S] cluster contacts are provided by Cys-377, Cys-380, Cys-383, Cys-387, Cys-416, Cys-419, Cys-422, and Cys-426. Residues 630–682 (AKARKLEQQQANAEPEEQIDPRKAAVEAAIARAKARKLEQQQANAEPEEQIDP) are disordered.

The protein belongs to the 4Fe4S bacterial-type ferredoxin family. RnfC subfamily. The complex is composed of six subunits: RsxA, RsxB, RsxC, RsxD, RsxE and RsxG. Requires [4Fe-4S] cluster as cofactor.

It localises to the cell inner membrane. Functionally, part of a membrane-bound complex that couples electron transfer with translocation of ions across the membrane. Required to maintain the reduced state of SoxR. The protein is Ion-translocating oxidoreductase complex subunit C of Escherichia coli (strain UTI89 / UPEC).